Here is a 109-residue protein sequence, read N- to C-terminus: Nascent polypeptide-associated complex protein (109 aa).

One can recognise an NAC-A/B domain in the interval 3–69 (PMNPKQLKKL…TEEERVVLKI (67 aa)).

The protein belongs to the NAC-alpha family. As to quaternary structure, homodimer. Interacts with the ribosome. Binds ribosomal RNA.

Contacts the emerging nascent chain on the ribosome. The chain is Nascent polypeptide-associated complex protein from Pyrococcus abyssi (strain GE5 / Orsay).